Reading from the N-terminus, the 830-residue chain is Penicillin-binding protein 1A (830 aa).

Over 1–18 (MGKKKKKRKSSAFKIILN) the chain is Cytoplasmic. Residues 19-39 (VFLSIFLVAGVAFGGIVFAMI) form a helical; Signal-anchor for type II membrane protein membrane-spanning segment. The Extracellular segment spans residues 40–830 (KTAPPLNVQQ…QNHEDNKNKQ (791 aa)). The interval 57–229 (SILYDDKGQY…PSVYYPYSSA (173 aa)) is transglycosylase. Glu96 (proton donor; for transglycosylase activity) is an active-site residue. Positions 357 to 641 (ASAVIMDYHN…AARLWGDIMK (285 aa)) are transpeptidase. The active-site Acyl-ester intermediate; for transpeptidase activity is the Ser398. Positions 754–830 (GGSLPPTEEK…QNHEDNKNKQ (77 aa)) are disordered. Residues 760 to 786 (TEEKNNSNTRDKNKDKNKNKNKDKNPS) show a composition bias toward basic and acidic residues. Low complexity predominate over residues 787 to 820 (QDKPNNNNNDNNSNNNNNNNDNNNNTKPPENDSN). The span at 821–830 (QNHEDNKNKQ) shows a compositional bias: basic and acidic residues.

The protein in the N-terminal section; belongs to the glycosyltransferase 51 family. It in the C-terminal section; belongs to the transpeptidase family.

It is found in the cell membrane. The enzyme catalyses [GlcNAc-(1-&gt;4)-Mur2Ac(oyl-L-Ala-gamma-D-Glu-L-Lys-D-Ala-D-Ala)](n)-di-trans,octa-cis-undecaprenyl diphosphate + beta-D-GlcNAc-(1-&gt;4)-Mur2Ac(oyl-L-Ala-gamma-D-Glu-L-Lys-D-Ala-D-Ala)-di-trans,octa-cis-undecaprenyl diphosphate = [GlcNAc-(1-&gt;4)-Mur2Ac(oyl-L-Ala-gamma-D-Glu-L-Lys-D-Ala-D-Ala)](n+1)-di-trans,octa-cis-undecaprenyl diphosphate + di-trans,octa-cis-undecaprenyl diphosphate + H(+). It catalyses the reaction Preferential cleavage: (Ac)2-L-Lys-D-Ala-|-D-Ala. Also transpeptidation of peptidyl-alanyl moieties that are N-acyl substituents of D-alanine.. It functions in the pathway cell wall biogenesis; peptidoglycan biosynthesis. Cell wall formation. Synthesis of cross-linked peptidoglycan from the lipid intermediates. The enzyme has a penicillin-insensitive transglycosylase N-terminal domain (formation of linear glycan strands) and a penicillin-sensitive transpeptidase C-terminal domain (cross-linking of the peptide subunits). The polypeptide is Penicillin-binding protein 1A (pbpA) (Clostridium botulinum (strain Hall / ATCC 3502 / NCTC 13319 / Type A)).